A 143-amino-acid chain; its full sequence is MALERTLSIIKPDAVAKNLIGAIYNRFESAGLRIVGAKMMHLSKEQAEGFYAEHKERPFFGALVEFMTSGPIVVQVLEGEDAVRKNRDIMGATNPAEALAGTIRADYAETIDENAVHGSDATESAAREISYFFSDEEVCQRTR.

Residues Lys-11, Phe-59, Arg-87, Thr-93, Arg-104, and Asn-114 each contribute to the ATP site. The Pros-phosphohistidine intermediate role is filled by His-117.

Belongs to the NDK family. Homotetramer. Mg(2+) serves as cofactor.

It is found in the cytoplasm. The catalysed reaction is a 2'-deoxyribonucleoside 5'-diphosphate + ATP = a 2'-deoxyribonucleoside 5'-triphosphate + ADP. The enzyme catalyses a ribonucleoside 5'-diphosphate + ATP = a ribonucleoside 5'-triphosphate + ADP. Its function is as follows. Major role in the synthesis of nucleoside triphosphates other than ATP. The ATP gamma phosphate is transferred to the NDP beta phosphate via a ping-pong mechanism, using a phosphorylated active-site intermediate. The sequence is that of Nucleoside diphosphate kinase from Idiomarina loihiensis (strain ATCC BAA-735 / DSM 15497 / L2-TR).